Reading from the N-terminus, the 262-residue chain is Tryptophan synthase alpha chain (262 aa).

Active-site proton acceptor residues include Glu-47 and Asp-58.

It belongs to the TrpA family. Tetramer of two alpha and two beta chains.

It carries out the reaction (1S,2R)-1-C-(indol-3-yl)glycerol 3-phosphate + L-serine = D-glyceraldehyde 3-phosphate + L-tryptophan + H2O. Its pathway is amino-acid biosynthesis; L-tryptophan biosynthesis; L-tryptophan from chorismate: step 5/5. Functionally, the alpha subunit is responsible for the aldol cleavage of indoleglycerol phosphate to indole and glyceraldehyde 3-phosphate. This chain is Tryptophan synthase alpha chain, found in Chromobacterium violaceum (strain ATCC 12472 / DSM 30191 / JCM 1249 / CCUG 213 / NBRC 12614 / NCIMB 9131 / NCTC 9757 / MK).